Consider the following 638-residue polypeptide: Chaperone protein DnaK (638 aa).

Threonine 196 carries the phosphothreonine; by autocatalysis modification. Residues 592-638 (ASNLYQQPGAEAGAAPQPETNGQQESKGGDGAVNAEYEVIDGDDDKK) are disordered. Over residues 597–610 (QQPGAEAGAAPQPE) the composition is skewed to low complexity. Over residues 629 to 638 (EVIDGDDDKK) the composition is skewed to acidic residues.

This sequence belongs to the heat shock protein 70 family.

Functionally, acts as a chaperone. In Chlorobaculum parvum (strain DSM 263 / NCIMB 8327) (Chlorobium vibrioforme subsp. thiosulfatophilum), this protein is Chaperone protein DnaK.